Reading from the N-terminus, the 314-residue chain is Homoserine O-succinyltransferase (314 aa).

Catalysis depends on Cys-142, which acts as the Acyl-thioester intermediate. Positions 163 and 192 each coordinate substrate. His-235 serves as the catalytic Proton acceptor. Glu-237 is a catalytic residue. Position 249 (Arg-249) interacts with substrate.

It belongs to the MetA family.

It localises to the cytoplasm. The catalysed reaction is L-homoserine + succinyl-CoA = O-succinyl-L-homoserine + CoA. It participates in amino-acid biosynthesis; L-methionine biosynthesis via de novo pathway; O-succinyl-L-homoserine from L-homoserine: step 1/1. Functionally, transfers a succinyl group from succinyl-CoA to L-homoserine, forming succinyl-L-homoserine. The protein is Homoserine O-succinyltransferase of Shewanella woodyi (strain ATCC 51908 / MS32).